The primary structure comprises 696 residues: Tensin-4 (696 aa).

An N-terminal signal peptide occupies residues 1–14; that stretch reads MSSSLLAGGHMVSL. Disordered regions lie at residues 157 to 246, 271 to 344, and 356 to 416; these read LDGP…RAPQ, SLPH…CPAS, and LING…KDMQ. Polar residues predominate over residues 192–203; sequence SSSNESLIFSGN. Ser230 is modified (phosphoserine). The span at 271-304 shows a compositional bias: low complexity; sequence SLPHSSLSSYPSSSRSLGSPASSSSSLHSLDRGS. Polar residues-rich tracts occupy residues 326 to 344 and 372 to 397; these read QAVQ…CPAS and PGHQ…SPSK. Positions 429-536 constitute an SH2 domain; sequence WFKPSITREQ…ALPCKLTIPQ (108 aa). A PTB domain is found at 563-690; the sequence is CHTLYLSSVS…QVISLVTALL (128 aa).

Belongs to the PTEN phosphatase protein family. As to quaternary structure, interacts (via SH2 domain) with Rho GTPase-activating protein DLC1 (via C-terminus); the interaction is independent of DLC1 tyrosine phosphorylation. Interacts with integrin ITGB1; the interaction displaces tensin TNS3 from the ITGB1 cytoplasmic tail and promotes ITGB1 stability. Interacts (via SH2 domain) with E3 ubiquitin-protein ligase CBL (phosphorylated on 'Tyr-780'); the interaction is enhanced in the presence of EGF and reduces interaction of CBL with EGFR. Interacts (via SH2 domain) with receptor tyrosine kinase MET (when phosphorylated); the interaction increases MET protein stability.

Its subcellular location is the cell junction. It localises to the focal adhesion. The protein localises to the cytoplasm. The protein resides in the cytoskeleton. Functionally, promotes EGF-induced cell migration by displacing tensin TNS3 from the cytoplasmic tail of integrin ITGB1 which results in dissociation of TNS3 from focal adhesions, disassembly of actin stress fibers and initiation of cell migration. Suppresses ligand-induced degradation of EGFR by reducing EGFR ubiquitination in the presence of EGF. Increases MET protein stability by inhibiting MET endocytosis and subsequent lysosomal degradation which leads to increased cell survival, proliferation and migration. The chain is Tensin-4 (Tns4) from Mus musculus (Mouse).